The sequence spans 137 residues: Nucleoside diphosphate kinase (137 aa).

ATP-binding residues include lysine 9, phenylalanine 57, arginine 85, threonine 91, arginine 102, and asparagine 112. The active-site Pros-phosphohistidine intermediate is the histidine 115.

This sequence belongs to the NDK family. In terms of assembly, homotetramer. Mg(2+) is required as a cofactor.

The protein resides in the cytoplasm. The catalysed reaction is a 2'-deoxyribonucleoside 5'-diphosphate + ATP = a 2'-deoxyribonucleoside 5'-triphosphate + ADP. It carries out the reaction a ribonucleoside 5'-diphosphate + ATP = a ribonucleoside 5'-triphosphate + ADP. In terms of biological role, major role in the synthesis of nucleoside triphosphates other than ATP. The ATP gamma phosphate is transferred to the NDP beta phosphate via a ping-pong mechanism, using a phosphorylated active-site intermediate. The chain is Nucleoside diphosphate kinase from Leptospira interrogans serogroup Icterohaemorrhagiae serovar Lai (strain 56601).